A 291-amino-acid polypeptide reads, in one-letter code: Kidney mitochondrial carrier protein 1 (291 aa).

3 Solcar repeats span residues 7-96 (KPFI…LKRL), 104-189 (ETLV…TKKH), and 198-289 (DTVY…LKKL). 6 helical membrane passes run 9–26 (FIYGGLASITAECGTFPI), 71–89 (GIAPAMLRQASYGTIKIGT), 106–124 (LVLNAFCGVLSGVVSSCIA), 164–183 (GVSLTAQRAAIVVGVELPVY), 204–224 (FLSSFTCGLAGALASNPVDVV), and 264–283 (GFWPNWLRLGPWNIIFFITY).

This sequence belongs to the mitochondrial carrier (TC 2.A.29) family.

Its subcellular location is the mitochondrion inner membrane. It catalyses the reaction sulfite(in) + sulfate(out) = sulfite(out) + sulfate(in). The enzyme catalyses thiosulfate(in) + sulfate(out) = thiosulfate(out) + sulfate(in). The catalysed reaction is sulfate(out) + phosphate(in) = sulfate(in) + phosphate(out). It carries out the reaction oxalate(in) + sulfate(out) = oxalate(out) + sulfate(in). It catalyses the reaction malonate(in) + sulfate(out) = malonate(out) + sulfate(in). The enzyme catalyses maleate(in) + sulfate(out) = maleate(out) + sulfate(in). The catalysed reaction is (S)-malate(in) + sulfate(out) = (S)-malate(out) + sulfate(in). It carries out the reaction (3S)-citramalate(in) + sulfate(out) = (3S)-citramalate(out) + sulfate(in). It catalyses the reaction (3R)-citramalate(in) + sulfate(out) = (3R)-citramalate(out) + sulfate(in). The enzyme catalyses sulfate(out) + succinate(in) = sulfate(in) + succinate(out). The catalysed reaction is (S,S)-tartrate(in) + sulfate(out) = (S,S)-tartrate(out) + sulfate(in). It carries out the reaction (2R,3R)-tartrate(in) + sulfate(out) = (2R,3R)-tartrate(out) + sulfate(in). It catalyses the reaction D-aspartate(in) + sulfate(out) = D-aspartate(out) + sulfate(in). The enzyme catalyses L-aspartate(in) + sulfate(out) = L-aspartate(out) + sulfate(in). The catalysed reaction is sulfate(in) = sulfate(out). It carries out the reaction phosphate(in) = phosphate(out). It catalyses the reaction (S)-malate(out) = (S)-malate(in). In terms of biological role, probable transporter. Its function is as follows. Antiporter that transports inorganic anions (sulfate, sulfite, thiosulfate and phosphate) and, to a lesser extent, a variety of dicarboxylates (e.g. malonate, malate and citramalate) and, even more so, aspartate. The sulfate/sulfate exchange is much higher than the phosphate/phosphate and malate/malate exchanges. The transport affinities is higher for sulfate and thiosulfate than for any other substrate. May catalyze the export of sulfite and thiosulfate (the hydrogen sulfide degradation products) from the mitochondria, thereby modulating the level of the hydrogen sulfide. Also may mediate a very low unidirectional transport of sulfate, phosphate and (S)-malate. This chain is Kidney mitochondrial carrier protein 1, found in Xenopus laevis (African clawed frog).